We begin with the raw amino-acid sequence, 74 residues long: UPF0435 protein ABC2298 (74 aa).

It belongs to the UPF0435 family.

The polypeptide is UPF0435 protein ABC2298 (Shouchella clausii (strain KSM-K16) (Alkalihalobacillus clausii)).